The sequence spans 459 residues: Bifunctional protein GlmU (459 aa).

The segment at 1-230 is pyrophosphorylase; sequence MSNRFAVILA…FDETLGVNDR (230 aa). UDP-N-acetyl-alpha-D-glucosamine is bound by residues 9-12, lysine 23, glutamine 73, and 78-79; these read LAAG and GT. Mg(2+) is bound at residue aspartate 103. 4 residues coordinate UDP-N-acetyl-alpha-D-glucosamine: glycine 140, glutamate 155, asparagine 170, and asparagine 228. Asparagine 228 contributes to the Mg(2+) binding site. The linker stretch occupies residues 231–251; it reads VALSQAEIIMKNRINRKNMVN. The interval 252–459 is N-acetyltransferase; it reads GVTIIDPSNT…VDQLLNKKKS (208 aa). UDP-N-acetyl-alpha-D-glucosamine contacts are provided by arginine 333 and lysine 351. Histidine 363 (proton acceptor) is an active-site residue. Tyrosine 366 and asparagine 377 together coordinate UDP-N-acetyl-alpha-D-glucosamine. Residues 386 to 387, alanine 423, and arginine 440 each bind acetyl-CoA; that span reads NY.

This sequence in the N-terminal section; belongs to the N-acetylglucosamine-1-phosphate uridyltransferase family. It in the C-terminal section; belongs to the transferase hexapeptide repeat family. As to quaternary structure, homotrimer. The cofactor is Mg(2+).

The protein localises to the cytoplasm. The enzyme catalyses alpha-D-glucosamine 1-phosphate + acetyl-CoA = N-acetyl-alpha-D-glucosamine 1-phosphate + CoA + H(+). It catalyses the reaction N-acetyl-alpha-D-glucosamine 1-phosphate + UTP + H(+) = UDP-N-acetyl-alpha-D-glucosamine + diphosphate. Its pathway is nucleotide-sugar biosynthesis; UDP-N-acetyl-alpha-D-glucosamine biosynthesis; N-acetyl-alpha-D-glucosamine 1-phosphate from alpha-D-glucosamine 6-phosphate (route II): step 2/2. It functions in the pathway nucleotide-sugar biosynthesis; UDP-N-acetyl-alpha-D-glucosamine biosynthesis; UDP-N-acetyl-alpha-D-glucosamine from N-acetyl-alpha-D-glucosamine 1-phosphate: step 1/1. It participates in bacterial outer membrane biogenesis; LPS lipid A biosynthesis. Its function is as follows. Catalyzes the last two sequential reactions in the de novo biosynthetic pathway for UDP-N-acetylglucosamine (UDP-GlcNAc). The C-terminal domain catalyzes the transfer of acetyl group from acetyl coenzyme A to glucosamine-1-phosphate (GlcN-1-P) to produce N-acetylglucosamine-1-phosphate (GlcNAc-1-P), which is converted into UDP-GlcNAc by the transfer of uridine 5-monophosphate (from uridine 5-triphosphate), a reaction catalyzed by the N-terminal domain. This is Bifunctional protein GlmU from Bacillus thuringiensis subsp. konkukian (strain 97-27).